The chain runs to 622 residues: Apical membrane antigen 1 (622 aa).

The signal sequence occupies residues 1–24; it reads MRKLYCVLLLSAFEFTYMINFGRG. The Extracellular segment spans residues 25 to 546; the sequence is QNYWEHPYQN…EHKPTYDNMK (522 aa). Disulfide bonds link Cys-149-Cys-302, Cys-217-Cys-247, Cys-263-Cys-275, Cys-320-Cys-418, and Cys-337-Cys-409. N-linked (GlcNAc...) asparagine glycans are attached at residues Asn-286, Asn-371, Asn-421, Asn-422, and Asn-499. Cystine bridges form between Cys-443/Cys-502, Cys-490/Cys-507, and Cys-492/Cys-509. A helical membrane pass occupies residues 547–567; sequence IIIASSAAVAVLATILMVYLY. Residues 568–622 are Cytoplasmic-facing; it reads KRKGNAEKYDKMDEPQDYGKSTSRNDEMLDPEASFWGEEKRASHTTPVLMEKPYY. Residues 577–607 form a disordered region; it reads DKMDEPQDYGKSTSRNDEMLDPEASFWGEEK.

This sequence belongs to the apicomplexan parasites AMA1 family.

The protein resides in the membrane. Functionally, involved in parasite invasion of erythrocytes. The protein is Apical membrane antigen 1 (AMA-1) of Plasmodium falciparum (isolate thtn / Thailand).